We begin with the raw amino-acid sequence, 148 residues long: Large ribosomal subunit protein bL9 (148 aa).

It belongs to the bacterial ribosomal protein bL9 family.

Functionally, binds to the 23S rRNA. The sequence is that of Large ribosomal subunit protein bL9 from Bifidobacterium adolescentis (strain ATCC 15703 / DSM 20083 / NCTC 11814 / E194a).